A 267-amino-acid polypeptide reads, in one-letter code: MLNPTYLQQIRSQNPLIHNITNVVAANFSANGLLAIGASPLMSAAMEEMHEVPRLSQALVINIGTLMGKEVDAMVLAGKTANEVGIPVVLDPVGVGATTFRKQTVARLLKEVKFAAIRGNAGELATIAEVNWQAKGVDAGSGEADLAQIAHIVAKTYQCIAMISGATDYLSDGEHHAQIHNGTPLFPKITASGCLLSAVCGAFLAVAKPEQYFDAMLEACTAYAIAGELAAQGLKTTQHGQFYVGLLDQLAHLSPETINQYARISYE.

M42 serves as a coordination point for substrate. Residues R118 and S164 each contribute to the ATP site. A191 contributes to the substrate binding site.

Belongs to the Thz kinase family. It depends on Mg(2+) as a cofactor.

It catalyses the reaction 5-(2-hydroxyethyl)-4-methylthiazole + ATP = 4-methyl-5-(2-phosphooxyethyl)-thiazole + ADP + H(+). Its pathway is cofactor biosynthesis; thiamine diphosphate biosynthesis; 4-methyl-5-(2-phosphoethyl)-thiazole from 5-(2-hydroxyethyl)-4-methylthiazole: step 1/1. Functionally, catalyzes the phosphorylation of the hydroxyl group of 4-methyl-5-beta-hydroxyethylthiazole (THZ). The sequence is that of Hydroxyethylthiazole kinase from Pasteurella multocida (strain Pm70).